The primary structure comprises 329 residues: Ketol-acid reductoisomerase (NADP(+)) (329 aa).

One can recognise a KARI N-terminal Rossmann domain in the interval 1-181; the sequence is MKIYYDQDAD…GGTRGGVLTT (181 aa). Residues 24 to 27, Arg-47, and 82 to 85 contribute to the NADP(+) site; these read YGSQ and DQHQ. His-107 is an active-site residue. Residue Gly-133 participates in NADP(+) binding. Residues 182-327 form the KARI C-terminal knotted domain; the sequence is TFKEETETDL…AKLRGMMSWL (146 aa). Positions 190, 194, 226, and 230 each coordinate Mg(2+). Ser-251 provides a ligand contact to substrate.

The protein belongs to the ketol-acid reductoisomerase family. Mg(2+) is required as a cofactor.

It carries out the reaction (2R)-2,3-dihydroxy-3-methylbutanoate + NADP(+) = (2S)-2-acetolactate + NADPH + H(+). The enzyme catalyses (2R,3R)-2,3-dihydroxy-3-methylpentanoate + NADP(+) = (S)-2-ethyl-2-hydroxy-3-oxobutanoate + NADPH + H(+). Its pathway is amino-acid biosynthesis; L-isoleucine biosynthesis; L-isoleucine from 2-oxobutanoate: step 2/4. It participates in amino-acid biosynthesis; L-valine biosynthesis; L-valine from pyruvate: step 2/4. In terms of biological role, involved in the biosynthesis of branched-chain amino acids (BCAA). Catalyzes an alkyl-migration followed by a ketol-acid reduction of (S)-2-acetolactate (S2AL) to yield (R)-2,3-dihydroxy-isovalerate. In the isomerase reaction, S2AL is rearranged via a Mg-dependent methyl migration to produce 3-hydroxy-3-methyl-2-ketobutyrate (HMKB). In the reductase reaction, this 2-ketoacid undergoes a metal-dependent reduction by NADPH to yield (R)-2,3-dihydroxy-isovalerate. This is Ketol-acid reductoisomerase (NADP(+)) from Solidesulfovibrio magneticus (strain ATCC 700980 / DSM 13731 / RS-1) (Desulfovibrio magneticus).